We begin with the raw amino-acid sequence, 387 residues long: Formate-dependent phosphoribosylglycinamide formyltransferase (387 aa).

Residues 21–22 (EL) and Glu81 each bind N(1)-(5-phospho-beta-D-ribosyl)glycinamide. Residues Arg113, Lys154, 159–164 (SSGHGQ), 193–196 (EEFI), and Glu201 each bind ATP. The ATP-grasp domain occupies 118–306 (TFAAEEVGVK…EFALHLRAVL (189 aa)). Mg(2+) contacts are provided by Glu265 and Glu277. N(1)-(5-phospho-beta-D-ribosyl)glycinamide-binding positions include Asp284, Lys352, and 359 to 360 (RR).

Belongs to the PurK/PurT family. In terms of assembly, homodimer.

It carries out the reaction N(1)-(5-phospho-beta-D-ribosyl)glycinamide + formate + ATP = N(2)-formyl-N(1)-(5-phospho-beta-D-ribosyl)glycinamide + ADP + phosphate + H(+). It participates in purine metabolism; IMP biosynthesis via de novo pathway; N(2)-formyl-N(1)-(5-phospho-D-ribosyl)glycinamide from N(1)-(5-phospho-D-ribosyl)glycinamide (formate route): step 1/1. In terms of biological role, involved in the de novo purine biosynthesis. Catalyzes the transfer of formate to 5-phospho-ribosyl-glycinamide (GAR), producing 5-phospho-ribosyl-N-formylglycinamide (FGAR). Formate is provided by PurU via hydrolysis of 10-formyl-tetrahydrofolate. In Wolinella succinogenes (strain ATCC 29543 / DSM 1740 / CCUG 13145 / JCM 31913 / LMG 7466 / NCTC 11488 / FDC 602W) (Vibrio succinogenes), this protein is Formate-dependent phosphoribosylglycinamide formyltransferase.